We begin with the raw amino-acid sequence, 419 residues long: UDP-N-acetylmuramoylalanine--D-glutamate ligase (419 aa).

ATP is bound at residue 109 to 115 (GSTGKTT).

The protein belongs to the MurCDEF family.

Its subcellular location is the cytoplasm. The enzyme catalyses UDP-N-acetyl-alpha-D-muramoyl-L-alanine + D-glutamate + ATP = UDP-N-acetyl-alpha-D-muramoyl-L-alanyl-D-glutamate + ADP + phosphate + H(+). The protein operates within cell wall biogenesis; peptidoglycan biosynthesis. Functionally, cell wall formation. Catalyzes the addition of glutamate to the nucleotide precursor UDP-N-acetylmuramoyl-L-alanine (UMA). The protein is UDP-N-acetylmuramoylalanine--D-glutamate ligase of Chlamydia felis (strain Fe/C-56) (Chlamydophila felis).